The following is a 565-amino-acid chain: Berberine bridge enzyme-like C-2 (565 aa).

The signal sequence occupies residues 1-17; sequence MFPIIILISFSFTFLFA. Residues Asn28 and Asn40 are each glycosylated (N-linked (GlcNAc...) asparagine). An intrachain disulfide couples Cys32 to Cys94. The 177-residue stretch at 72 to 248 folds into the FAD-binding PCMH-type domain; it reads YMPKPTVIIL…YAWKIRLLKV (177 aa). His109 bears the Pros-8alpha-FAD histidine mark. N-linked (GlcNAc...) asparagine glycosylation is found at Asn363 and Asn502.

Belongs to the oxygen-dependent FAD-linked oxidoreductase family. FAD serves as cofactor.

The protein localises to the vacuole. The protein operates within alkaloid biosynthesis; nicotine biosynthesis. Its function is as follows. Involved in the biosynthesis of pyridine alkaloid natural products, leading mainly to the production of anabasine, anatabine, nicotine and nornicotine, effective deterrents against herbivores with antiparasitic and pesticide properties (neurotoxins); nornicotine serves as the precursor in the synthesis of the carcinogen compound N'-nitrosonornicotine (NNN). Catalyzes a late oxidation step subsequent to the pyridine ring condensation reaction in the biosynthesis of alkaloids. In Nicotiana tabacum (Common tobacco), this protein is Berberine bridge enzyme-like C-2.